The chain runs to 205 residues: Small ribosomal subunit protein uS4 (205 aa).

The interval 26–46 (PVNRREYGPGQHGQRRKQKPS) is disordered. An S4 RNA-binding domain is found at 94 to 157 (RRLDAVVYRL…KQLAIVLDAV (64 aa)).

The protein belongs to the universal ribosomal protein uS4 family. As to quaternary structure, part of the 30S ribosomal subunit. Contacts protein S5. The interaction surface between S4 and S5 is involved in control of translational fidelity.

In terms of biological role, one of the primary rRNA binding proteins, it binds directly to 16S rRNA where it nucleates assembly of the body of the 30S subunit. With S5 and S12 plays an important role in translational accuracy. This Gluconobacter oxydans (strain 621H) (Gluconobacter suboxydans) protein is Small ribosomal subunit protein uS4.